The following is a 643-amino-acid chain: Threonine--tRNA ligase 1 (643 aa).

Residues 3–64 (DMVKITFPDG…NEDGTVEIIT (62 aa)) form the TGS domain. Positions 245–542 (DHRKLGKELK…LIEEHKGALP (298 aa)) are catalytic. Zn(2+) contacts are provided by Cys-338, His-389, and His-519.

It belongs to the class-II aminoacyl-tRNA synthetase family. Homodimer. Zn(2+) is required as a cofactor.

It is found in the cytoplasm. It catalyses the reaction tRNA(Thr) + L-threonine + ATP = L-threonyl-tRNA(Thr) + AMP + diphosphate + H(+). In terms of biological role, catalyzes the attachment of threonine to tRNA(Thr) in a two-step reaction: L-threonine is first activated by ATP to form Thr-AMP and then transferred to the acceptor end of tRNA(Thr). Also edits incorrectly charged L-seryl-tRNA(Thr). The sequence is that of Threonine--tRNA ligase 1 (thrS) from Bacillus subtilis (strain 168).